Reading from the N-terminus, the 396-residue chain is 1-deoxy-D-xylulose 5-phosphate reductoisomerase (396 aa).

Thr-13, Gly-14, Ser-15, Ile-16, and Asn-127 together coordinate NADPH. Lys-128 is a 1-deoxy-D-xylulose 5-phosphate binding site. Glu-129 contacts NADPH. Asp-153 lines the Mn(2+) pocket. Positions 154, 155, 184, and 207 each coordinate 1-deoxy-D-xylulose 5-phosphate. A Mn(2+)-binding site is contributed by Glu-155. Gly-213 contacts NADPH. Positions 220, 225, 226, and 229 each coordinate 1-deoxy-D-xylulose 5-phosphate. Glu-229 is a binding site for Mn(2+).

It belongs to the DXR family. Mg(2+) serves as cofactor. It depends on Mn(2+) as a cofactor.

It carries out the reaction 2-C-methyl-D-erythritol 4-phosphate + NADP(+) = 1-deoxy-D-xylulose 5-phosphate + NADPH + H(+). The protein operates within isoprenoid biosynthesis; isopentenyl diphosphate biosynthesis via DXP pathway; isopentenyl diphosphate from 1-deoxy-D-xylulose 5-phosphate: step 1/6. Functionally, catalyzes the NADPH-dependent rearrangement and reduction of 1-deoxy-D-xylulose-5-phosphate (DXP) to 2-C-methyl-D-erythritol 4-phosphate (MEP). The chain is 1-deoxy-D-xylulose 5-phosphate reductoisomerase from Pseudomonas savastanoi pv. phaseolicola (strain 1448A / Race 6) (Pseudomonas syringae pv. phaseolicola (strain 1448A / Race 6)).